A 101-amino-acid polypeptide reads, in one-letter code: Small ubiquitin-related modifier 1 (101 aa).

Residues 20–97 enclose the Ubiquitin-like domain; sequence EYIKLKVIGQ…IEVYQEQTGG (78 aa). Residue Gly97 forms a Glycyl lysine isopeptide (Gly-Lys) (interchain with K-? in acceptor proteins) linkage. Residues 98 to 101 constitute a propeptide that is removed on maturation; the sequence is HSTV.

Belongs to the ubiquitin family. SUMO subfamily. Interacts with SAE2, UBE2I, RANBP2, PIAS1 and PIAS2. Covalently attached to a number of proteins. Post-translationally, cleavage of precursor form by a sentrin-specific protease is necessary for function.

It localises to the nucleus membrane. The protein resides in the nucleus speckle. It is found in the cytoplasm. Its subcellular location is the nucleus. The protein localises to the PML body. It localises to the cell membrane. In terms of biological role, ubiquitin-like protein that can be covalently attached to proteins as a monomer or a lysine-linked polymer. Covalent attachment via an isopeptide bond to its substrates requires prior activation by the E1 complex SAE1-SAE2 and linkage to the E2 enzyme UBE2I. This post-translational modification on lysine residues of proteins plays a crucial role in a number of cellular processes such as nuclear transport, DNA replication and repair, mitosis and signal transduction. Polymeric SUMO1 chains are also susceptible to polyubiquitination which functions as a signal for proteasomal degradation of modified proteins. The sequence is that of Small ubiquitin-related modifier 1 (SUMO1) from Gallus gallus (Chicken).